Reading from the N-terminus, the 250-residue chain is Ubiquitin-conjugating enzyme E2 6 (250 aa).

Residues 1-232 (MATKQAHKRL…DGKEPNDSSS (232 aa)) lie on the Cytoplasmic side of the membrane. The UBC core domain maps to 5–167 (QAHKRLTKEY…VQENVETLEK (163 aa)). Cysteine 87 functions as the Glycyl thioester intermediate in the catalytic mechanism. Serine 139 is modified (phosphoserine). At threonine 178 the chain carries Phosphothreonine. The interval 209–229 (AEQALRQSENNSKKDGKEPND) is disordered. Residues 219-228 (NSKKDGKEPN) show a composition bias toward basic and acidic residues. A helical transmembrane segment spans residues 233–249 (MVYIGIAIFLFLVGLFM).

The protein belongs to the ubiquitin-conjugating enzyme family.

It localises to the endoplasmic reticulum membrane. The catalysed reaction is S-ubiquitinyl-[E1 ubiquitin-activating enzyme]-L-cysteine + [E2 ubiquitin-conjugating enzyme]-L-cysteine = [E1 ubiquitin-activating enzyme]-L-cysteine + S-ubiquitinyl-[E2 ubiquitin-conjugating enzyme]-L-cysteine.. It participates in protein modification; protein ubiquitination. Catalyzes the covalent attachment of ubiquitin to other proteins. Functions in degradation of misfolded or regulated proteins localized in the endoplasmic reticulum (ER) lumen or membrane via the ubiquitin-proteasome system. Cognate E2 conjugating enzyme for the DOA10 ubiquitin ligase complex, which is part of the ERAD-C pathway responsible for the rapid degradation of membrane proteins with misfolded cytoplasmic domains. The sequence is that of Ubiquitin-conjugating enzyme E2 6 (UBC6) from Saccharomyces cerevisiae (strain ATCC 204508 / S288c) (Baker's yeast).